Consider the following 112-residue polypeptide: ATP-dependent Clp protease adapter protein ClpS (112 aa).

Belongs to the ClpS family. As to quaternary structure, binds to the N-terminal domain of the chaperone ClpA.

Involved in the modulation of the specificity of the ClpAP-mediated ATP-dependent protein degradation. This chain is ATP-dependent Clp protease adapter protein ClpS, found in Rhodococcus jostii (strain RHA1).